Here is a 427-residue protein sequence, read N- to C-terminus: Transcobalamin-2 (427 aa).

The N-terminal stretch at 1-18 (MELLKALLLLSGVLGALA) is a signal peptide. Cystine bridges form between cysteine 21/cysteine 268, cysteine 116/cysteine 310, and cysteine 165/cysteine 208. Cob(II)alamin-binding positions include 152 to 156 (TSYYQ), histidine 193, 193 to 197 (HLSVD), asparagine 245, serine 248, glutamine 292, and 395 to 397 (WQL).

This sequence belongs to the eukaryotic cobalamin transport proteins family. As to quaternary structure, interacts with CD320 (via LDL-receptor class A domains).

It is found in the secreted. Primary vitamin B12-binding and transport protein. Delivers cobalamin to cells. The protein is Transcobalamin-2 (Tcn2) of Rattus norvegicus (Rat).